A 140-amino-acid polypeptide reads, in one-letter code: MIDINAIKEALPHRYPMLLVDRVLEVSEDEIVALKNVTINEPFFNGHFPQYPVMPGVLIMEALAQTAGVLELSKEENKGKLVFYAGMDKVKFKKQVVPGDQLIMTAKFVKRRGTIAVVEAKAEVDGKLAASGTLTFAIGQ.

Residue histidine 47 is part of the active site.

The protein belongs to the thioester dehydratase family. FabZ subfamily.

The protein resides in the cytoplasm. It carries out the reaction a (3R)-hydroxyacyl-[ACP] = a (2E)-enoyl-[ACP] + H2O. Functionally, involved in unsaturated fatty acids biosynthesis. Catalyzes the dehydration of short chain beta-hydroxyacyl-ACPs and long chain saturated and unsaturated beta-hydroxyacyl-ACPs. This Streptococcus gordonii (strain Challis / ATCC 35105 / BCRC 15272 / CH1 / DL1 / V288) protein is 3-hydroxyacyl-[acyl-carrier-protein] dehydratase FabZ.